The sequence spans 130 residues: MTTKRKAYVRTMAPNWWQQLGFYRFYMLREGTSIPAVWFSVLLIYGVFSLKSGPAGWEGFVSFLQNPLVLFLNILTLFAALLHTKTWFELAPKAVNIIVKSEKMGPEPMIKALWVVTVVASAIILAVALL.

3 helical membrane passes run 30–50 (EGTSIPAVWFSVLLIYGVFSL), 60–80 (FVSFLQNPLVLFLNILTLFAA), and 110–130 (IKALWVVTVVASAIILAVALL).

The protein belongs to the FrdC family. As to quaternary structure, part of an enzyme complex containing four subunits: a flavoprotein (FrdA), an iron-sulfur protein (FrdB), and two hydrophobic anchor proteins (FrdC and FrdD).

Its subcellular location is the cell inner membrane. In terms of biological role, two distinct, membrane-bound, FAD-containing enzymes are responsible for the catalysis of fumarate and succinate interconversion; fumarate reductase is used in anaerobic growth, and succinate dehydrogenase is used in aerobic growth. Anchors the catalytic components of the fumarate reductase complex to the cell inner membrane, binds quinones. The chain is Fumarate reductase subunit C from Yersinia pestis bv. Antiqua (strain Angola).